We begin with the raw amino-acid sequence, 264 residues long: MVKRHIGSWILVLFVVMWSDVGLCKKRPKPGGGWNTGGSRYPGQGSPGGNRYPSQGGGGWGQPHGGGWGQPHGGGWGQPHGGGWGQPHGGGWGQPHGGGGWGQGGTHSQWNKPSKPKTNMKHMAGAAAAGAVVGGLGGYMLGSAMSRPLIHFGNDYEDRYYRENMHRYPNQVYYRPVDQYSNQNNFVHDCVNITVKEHTVTTTTKGENFTETDIKMMERVVEQMCITQYQRESQAYYQRGASVILFSSPPVILLISLLIFLIVG.

A signal peptide spans M1–C24. Residues K25–A241 are interaction with GRB2, ERI3 and SYN1. The tract at residues R27–N119 is disordered. 6 consecutive repeat copies span residues S54–Q62, P63–Q70, P71–Q78, P79–Q86, P87–Q94, and P95–Q103. A 6 X 8 AA tandem repeats of P-H-G-G-G-W-G-Q region spans residues S54–Q103. A compositionally biased stretch (gly residues) spans Q55–G105. Positions 72, 73, 74, 80, 81, 82, 88, 89, 90, 96, 98, and 99 each coordinate Cu(2+). Residues C190 and C225 are joined by a disulfide bond. N192 and N208 each carry an N-linked (GlcNAc...) asparagine glycan. A241 is lipidated: GPI-anchor amidated alanine. Residues S242 to G264 constitute a propeptide, removed in mature form.

The protein belongs to the prion family. In terms of assembly, monomer and homodimer. Has a tendency to aggregate into amyloid fibrils containing a cross-beta spine, formed by a steric zipper of superposed beta-strands. Soluble oligomers may represent an intermediate stage on the path to fibril formation. Copper binding may promote oligomerization. Interacts with GRB2, APP, ERI3/PRNPIP and SYN1. Mislocalized cytosolically exposed PrP interacts with MGRN1; this interaction alters MGRN1 subcellular location and causes lysosomal enlargement. Interacts with KIAA1191.

Its subcellular location is the cell membrane. The protein resides in the golgi apparatus. Its primary physiological function is unclear. Has cytoprotective activity against internal or environmental stresses. May play a role in neuronal development and synaptic plasticity. May be required for neuronal myelin sheath maintenance. May play a role in iron uptake and iron homeostasis. Soluble oligomers are toxic to cultured neuroblastoma cells and induce apoptosis (in vitro). Association with GPC1 (via its heparan sulfate chains) targets PRNP to lipid rafts. Also provides Cu(2+) or Zn(2+) for the ascorbate-mediated GPC1 deaminase degradation of its heparan sulfate side chains. This Bubalus bubalis (Domestic water buffalo) protein is Major prion protein (PRNP).